We begin with the raw amino-acid sequence, 196 residues long: Leucyl/phenylalanyl-tRNA--protein transferase (196 aa).

The protein belongs to the L/F-transferase family.

The protein localises to the cytoplasm. The catalysed reaction is N-terminal L-lysyl-[protein] + L-leucyl-tRNA(Leu) = N-terminal L-leucyl-L-lysyl-[protein] + tRNA(Leu) + H(+). It carries out the reaction N-terminal L-arginyl-[protein] + L-leucyl-tRNA(Leu) = N-terminal L-leucyl-L-arginyl-[protein] + tRNA(Leu) + H(+). It catalyses the reaction L-phenylalanyl-tRNA(Phe) + an N-terminal L-alpha-aminoacyl-[protein] = an N-terminal L-phenylalanyl-L-alpha-aminoacyl-[protein] + tRNA(Phe). Functions in the N-end rule pathway of protein degradation where it conjugates Leu, Phe and, less efficiently, Met from aminoacyl-tRNAs to the N-termini of proteins containing an N-terminal arginine or lysine. The chain is Leucyl/phenylalanyl-tRNA--protein transferase from Thermosynechococcus vestitus (strain NIES-2133 / IAM M-273 / BP-1).